A 244-amino-acid chain; its full sequence is Phosphoadenosine 5'-phosphosulfate reductase (244 aa).

Catalysis depends on Cys-239, which acts as the Nucleophile; cysteine thiosulfonate intermediate.

This sequence belongs to the PAPS reductase family. CysH subfamily.

It is found in the cytoplasm. It carries out the reaction [thioredoxin]-disulfide + sulfite + adenosine 3',5'-bisphosphate + 2 H(+) = [thioredoxin]-dithiol + 3'-phosphoadenylyl sulfate. The protein operates within sulfur metabolism; hydrogen sulfide biosynthesis; sulfite from sulfate: step 3/3. In terms of biological role, catalyzes the formation of sulfite from phosphoadenosine 5'-phosphosulfate (PAPS) using thioredoxin as an electron donor. This Salmonella paratyphi A (strain AKU_12601) protein is Phosphoadenosine 5'-phosphosulfate reductase.